A 180-amino-acid chain; its full sequence is Beta-lactoglobulin (180 aa).

The N-terminal stretch at 1–18 (MKCLLLALGLALACGIQA) is a signal peptide. Disulfide bonds link C84/C178, C124/C137, and C124/C139.

Belongs to the calycin superfamily. Lipocalin family. In terms of assembly, under physiological conditions beta-lactoglobulin exists as an equilibrium mixture of monomeric and dimeric forms. Interaction with LMBR1L is controversial. Alternate disulfide bonds occur in equal amounts. As to expression, synthesized in mammary gland and secreted in milk.

The protein resides in the secreted. Functionally, primary component of whey, it binds retinol and is probably involved in the transport of that molecule. The protein is Beta-lactoglobulin (LGB) of Capra hircus (Goat).